We begin with the raw amino-acid sequence, 532 residues long: Light-independent protochlorophyllide reductase subunit B (532 aa).

Residue D36 participates in [4Fe-4S] cluster binding. D292 serves as the catalytic Proton donor. 428–429 provides a ligand contact to substrate; it reads GL. The segment at 445-486 is disordered; it reads EEEEPESISNGHAAAAGSEGGVPDSGEAGDAGDTDGMPWSPD.

Belongs to the ChlB/BchB/BchZ family. As to quaternary structure, protochlorophyllide reductase is composed of three subunits; BchL, BchN and BchB. Forms a heterotetramer of two BchB and two BchN subunits. [4Fe-4S] cluster serves as cofactor.

It catalyses the reaction chlorophyllide a + oxidized 2[4Fe-4S]-[ferredoxin] + 2 ADP + 2 phosphate = protochlorophyllide a + reduced 2[4Fe-4S]-[ferredoxin] + 2 ATP + 2 H2O. Its pathway is porphyrin-containing compound metabolism; bacteriochlorophyll biosynthesis (light-independent). Functionally, component of the dark-operative protochlorophyllide reductase (DPOR) that uses Mg-ATP and reduced ferredoxin to reduce ring D of protochlorophyllide (Pchlide) to form chlorophyllide a (Chlide). This reaction is light-independent. The NB-protein (BchN-BchB) is the catalytic component of the complex. The sequence is that of Light-independent protochlorophyllide reductase subunit B from Chlorobium phaeobacteroides (strain BS1).